The following is a 487-amino-acid chain: Glutamyl-tRNA(Gln) amidotransferase subunit A (487 aa).

Residues Lys-80 and Ser-155 each act as charge relay system in the active site. Ser-179 functions as the Acyl-ester intermediate in the catalytic mechanism.

The protein belongs to the amidase family. GatA subfamily. As to quaternary structure, heterotrimer of A, B and C subunits.

The catalysed reaction is L-glutamyl-tRNA(Gln) + L-glutamine + ATP + H2O = L-glutaminyl-tRNA(Gln) + L-glutamate + ADP + phosphate + H(+). Allows the formation of correctly charged Gln-tRNA(Gln) through the transamidation of misacylated Glu-tRNA(Gln) in organisms which lack glutaminyl-tRNA synthetase. The reaction takes place in the presence of glutamine and ATP through an activated gamma-phospho-Glu-tRNA(Gln). The protein is Glutamyl-tRNA(Gln) amidotransferase subunit A of Leptospira interrogans serogroup Icterohaemorrhagiae serovar Lai (strain 56601).